A 104-amino-acid polypeptide reads, in one-letter code: DNA-binding transcriptional repressor TubR (104 aa).

2 DNA-binding regions (HTH) span residues 43–50 (KTAVAEMI) and 54–65 (KPTVFATVNSFY).

Homodimer. Binds to tubC DNA, the TubR-DNA complex binds to TubZ.

A DNA-binding protein that is part of the type III plasmid partition system used to ensure correct segregation of the pBtoxis plasmid. Cooperatively binds to the centromere-like site (tubC), which may seed filament formation by the TubZ polymerizing GTPase, stabilizing TubZ filaments. TubR-tubC complexes track the depolymerizing minus end of the filament, probably pulling plasmid within the cell. Required for plasmid replication. Negatively regulates levels of TubZ; its effect on RNA expression has not been shown. Specifically binds iterons, 12-bp imperfect direct repeats that function as a plasmid origin of replication. Four TubR dimers bind to tubC, forming an extended bent DNA-protein filament with protein wrapping helically around the outside of the DNA. The sequence is that of DNA-binding transcriptional repressor TubR from Bacillus thuringiensis subsp. israelensis.